The following is a 464-amino-acid chain: MSTDKTNQSWGGRFSEPVDAFVARFTASVTFDQRLYRHDIMGSIAHATMLAKVGVLTDAERDSIIDGLNTIRGEIEAGTFDWRVDLEDVHMNIEARLTDRIGVTGKKLHTGRSRNDQVATDIRLWLRDEIDLILGEITRLQKGLLEQAERESDTIMPGFTHLQTAQPVTFGHHLLAWFEMLSRDYERLVDCRKRANRMPLGSAALAGTTYPIDREYTAQLLGFDAVGGNSLDGVSDRDFAIEFCAAASIAMMHLSRFSEELVLWTSAQFQFIDLPDRFCTGSSIMPQKKNPDVPELVRGKSGRVFGALMGLLTLMKGQPLAYNKDNQEDKEPLFDAADTLRDSLRAFADMIPAIKPKHAIMREAALRGFSTATDLADYLVRRGLPFRDCHEIVGHAVKYGVDTGKDLAEMSLEELRQFSDQIEQDVFAVLTLEGSVNARNHVGGTAPAQVKAAVVRGLTLLASR.

This sequence belongs to the lyase 1 family. Argininosuccinate lyase subfamily.

The protein resides in the cytoplasm. The catalysed reaction is 2-(N(omega)-L-arginino)succinate = fumarate + L-arginine. It functions in the pathway amino-acid biosynthesis; L-arginine biosynthesis; L-arginine from L-ornithine and carbamoyl phosphate: step 3/3. The polypeptide is Argininosuccinate lyase (Pseudomonas fluorescens (strain SBW25)).